A 321-amino-acid polypeptide reads, in one-letter code: Lipoyl synthase (321 aa).

[4Fe-4S] cluster contacts are provided by Cys68, Cys73, Cys79, Cys94, Cys98, Cys101, and Ser308. The region spanning Phe80 to Thr297 is the Radical SAM core domain.

The protein belongs to the radical SAM superfamily. Lipoyl synthase family. Requires [4Fe-4S] cluster as cofactor.

It localises to the cytoplasm. It carries out the reaction [[Fe-S] cluster scaffold protein carrying a second [4Fe-4S](2+) cluster] + N(6)-octanoyl-L-lysyl-[protein] + 2 oxidized [2Fe-2S]-[ferredoxin] + 2 S-adenosyl-L-methionine + 4 H(+) = [[Fe-S] cluster scaffold protein] + N(6)-[(R)-dihydrolipoyl]-L-lysyl-[protein] + 4 Fe(3+) + 2 hydrogen sulfide + 2 5'-deoxyadenosine + 2 L-methionine + 2 reduced [2Fe-2S]-[ferredoxin]. Its pathway is protein modification; protein lipoylation via endogenous pathway; protein N(6)-(lipoyl)lysine from octanoyl-[acyl-carrier-protein]: step 2/2. Its function is as follows. Catalyzes the radical-mediated insertion of two sulfur atoms into the C-6 and C-8 positions of the octanoyl moiety bound to the lipoyl domains of lipoate-dependent enzymes, thereby converting the octanoylated domains into lipoylated derivatives. This is Lipoyl synthase from Vibrio cholerae serotype O1 (strain ATCC 39541 / Classical Ogawa 395 / O395).